The sequence spans 444 residues: Phosphoglucosamine mutase (444 aa).

Ser104 serves as the catalytic Phosphoserine intermediate. 4 residues coordinate Mg(2+): Ser104, Asp243, Asp245, and Asp247. Ser104 carries the post-translational modification Phosphoserine.

Belongs to the phosphohexose mutase family. Mg(2+) serves as cofactor. Post-translationally, activated by phosphorylation.

It carries out the reaction alpha-D-glucosamine 1-phosphate = D-glucosamine 6-phosphate. In terms of biological role, catalyzes the conversion of glucosamine-6-phosphate to glucosamine-1-phosphate. The protein is Phosphoglucosamine mutase of Neisseria gonorrhoeae (strain ATCC 700825 / FA 1090).